We begin with the raw amino-acid sequence, 305 residues long: MSAREKPSSGLVGAGLLIVDKDAGVTSHDVVARCRKLLGTRKVGHAGTLDPMATGVLVLGVERATKLLGFLALTTKAYTATIRLGQATTTDDAEGEVVASADASGVTDEEIAAQVHTLTGDIQQIPSSVSAIKVDGRRAHALIRAGEEFELAPRSVTVSRFEVVARRTEGAFVDVDVEVECSSGTYVRALARDLGIALIGVGGHLTSLRRTRVGPFTLEHARTLEQLAEEPGVSLDIDAAAQTAFPHRQVDADEAESISQGRWLEPIGIKGVYAAIDPSGHTIALLQERGRRASSVMVVRPATLR.

Residue D50 is the Nucleophile of the active site.

The protein belongs to the pseudouridine synthase TruB family. Type 1 subfamily.

The enzyme catalyses uridine(55) in tRNA = pseudouridine(55) in tRNA. In terms of biological role, responsible for synthesis of pseudouridine from uracil-55 in the psi GC loop of transfer RNAs. This is tRNA pseudouridine synthase B from Rhodococcus jostii (strain RHA1).